The chain runs to 170 residues: Zinc finger A20 and AN1 domain-containing stress-associated protein 6 (170 aa).

The A20-type zinc-finger motif lies at 10–44 (PESNRLCVNNCGFLGSSATMNLCSNCYGDLCLKQQ). Positions 16, 20, 32, and 35 each coordinate Zn(2+). A disordered region spans residues 53–76 (TVESSLSVSPPSSSSSEISSPIIP). The AN1-type zinc-finger motif lies at 105–151 (QQRPNRCTTCRKRVGLTGFKCRCGTMFCGVHRYPEIHGCSYDFKSAG). Zn(2+) is bound by residues C111, C114, C125, C127, C132, H135, H141, and C143.

Functionally, may be involved in environmental stress response. This Arabidopsis thaliana (Mouse-ear cress) protein is Zinc finger A20 and AN1 domain-containing stress-associated protein 6 (SAP6).